A 75-amino-acid chain; its full sequence is Small ribosomal subunit protein bS18 (75 aa).

Belongs to the bacterial ribosomal protein bS18 family. Part of the 30S ribosomal subunit. Forms a tight heterodimer with protein bS6.

In terms of biological role, binds as a heterodimer with protein bS6 to the central domain of the 16S rRNA, where it helps stabilize the platform of the 30S subunit. The sequence is that of Small ribosomal subunit protein bS18 from Desulforudis audaxviator (strain MP104C).